A 752-amino-acid polypeptide reads, in one-letter code: Zinc finger protein 425 (752 aa).

Residues Val-9–Arg-80 form the KRAB domain. 19 consecutive C2H2-type zinc fingers follow at residues Tyr-190–His-212, Phe-246–His-268, Tyr-274–His-296, Phe-302–His-324, Phe-330–His-352, Phe-358–His-380, Phe-386–His-408, Phe-414–His-436, Phe-442–His-464, Phe-470–His-492, Phe-498–His-520, Phe-526–His-548, Phe-554–His-576, Phe-582–His-604, Tyr-610–His-632, Phe-638–His-660, Phe-666–His-688, Phe-694–His-716, and Phe-722–His-744.

It belongs to the krueppel C2H2-type zinc-finger protein family.

The protein resides in the nucleus. The protein localises to the cytoplasm. Functionally, acts as a transcriptional repressor. The protein is Zinc finger protein 425 (ZNF425) of Homo sapiens (Human).